The following is a 193-amino-acid chain: Phosphoheptose isomerase (193 aa).

Residues 37–193 (LADSFKVGGK…QLIEKEMVKA (157 aa)) enclose the SIS domain. 52–54 (NGG) lines the substrate pocket. 2 residues coordinate Zn(2+): His-61 and Glu-65. Residues Glu-65, 93–94 (ND), 119–121 (STS), Ser-124, and Gln-172 each bind substrate. Positions 172 and 180 each coordinate Zn(2+).

It belongs to the SIS family. GmhA subfamily. Homotetramer. Zn(2+) is required as a cofactor.

The protein resides in the cytoplasm. The enzyme catalyses 2 D-sedoheptulose 7-phosphate = D-glycero-alpha-D-manno-heptose 7-phosphate + D-glycero-beta-D-manno-heptose 7-phosphate. It functions in the pathway carbohydrate biosynthesis; D-glycero-D-manno-heptose 7-phosphate biosynthesis; D-glycero-alpha-D-manno-heptose 7-phosphate and D-glycero-beta-D-manno-heptose 7-phosphate from sedoheptulose 7-phosphate: step 1/1. The protein operates within bacterial outer membrane biogenesis; LPS core biosynthesis. Functionally, catalyzes the isomerization of sedoheptulose 7-phosphate in D-glycero-D-manno-heptose 7-phosphate. In Photorhabdus laumondii subsp. laumondii (strain DSM 15139 / CIP 105565 / TT01) (Photorhabdus luminescens subsp. laumondii), this protein is Phosphoheptose isomerase.